A 215-amino-acid chain; its full sequence is Adenylate kinase (215 aa).

10–15 lines the ATP pocket; the sequence is GAGKGT. The interval 30–59 is NMP; sequence STGDMLRAAVKAGTPIGLKAKAVMEAGELV. Residues Thr31, Arg36, 57–59, 85–88, and Gln92 contribute to the AMP site; these read ELV and GYPR. The tract at residues 126–163 is LID; it reads GRYTCANCGEGYHDRFKQPKVAGVCDVCGSAEFKRRPD. Arg127 contributes to the ATP binding site. Residues Cys130, Cys133, Cys150, and Cys153 each contribute to the Zn(2+) site. Arg160 and Arg172 together coordinate AMP. Ala200 provides a ligand contact to ATP.

The protein belongs to the adenylate kinase family. Monomer.

The protein localises to the cytoplasm. It catalyses the reaction AMP + ATP = 2 ADP. It participates in purine metabolism; AMP biosynthesis via salvage pathway; AMP from ADP: step 1/1. Catalyzes the reversible transfer of the terminal phosphate group between ATP and AMP. Plays an important role in cellular energy homeostasis and in adenine nucleotide metabolism. The polypeptide is Adenylate kinase (Rhizorhabdus wittichii (strain DSM 6014 / CCUG 31198 / JCM 15750 / NBRC 105917 / EY 4224 / RW1) (Sphingomonas wittichii)).